Here is a 236-residue protein sequence, read N- to C-terminus: 2-C-methyl-D-erythritol 4-phosphate cytidylyltransferase (236 aa).

It belongs to the IspD/TarI cytidylyltransferase family. IspD subfamily. In terms of assembly, homodimer.

The catalysed reaction is 2-C-methyl-D-erythritol 4-phosphate + CTP + H(+) = 4-CDP-2-C-methyl-D-erythritol + diphosphate. Its pathway is isoprenoid biosynthesis; isopentenyl diphosphate biosynthesis via DXP pathway; isopentenyl diphosphate from 1-deoxy-D-xylulose 5-phosphate: step 2/6. Catalyzes the formation of 4-diphosphocytidyl-2-C-methyl-D-erythritol from CTP and 2-C-methyl-D-erythritol 4-phosphate (MEP). This Klebsiella pneumoniae subsp. pneumoniae (strain ATCC 700721 / MGH 78578) protein is 2-C-methyl-D-erythritol 4-phosphate cytidylyltransferase.